We begin with the raw amino-acid sequence, 443 residues long: Serine/threonine-protein kinase 40 (443 aa).

The segment covering 1-11 (MKRRASERDAG) has biased composition (basic and acidic residues). The interval 1 to 26 (MKRRASERDAGETSARSKALCSSISG) is disordered. Over residues 14-26 (SARSKALCSSISG) the composition is skewed to polar residues. The 298-residue stretch at 35–332 (FILGPRLGNS…EVLESLGAII (298 aa)) folds into the Protein kinase domain. ATP-binding positions include 41-49 (LGNSPVPSI) and lysine 66. Residue aspartate 197 is the Proton acceptor of the active site.

Belongs to the protein kinase superfamily. CAMK Ser/Thr protein kinase family.

The protein localises to the nucleus. It localises to the cytoplasm. It catalyses the reaction L-seryl-[protein] + ATP = O-phospho-L-seryl-[protein] + ADP + H(+). The catalysed reaction is L-threonyl-[protein] + ATP = O-phospho-L-threonyl-[protein] + ADP + H(+). Functionally, may be a negative regulator of NF-kappa-B and p53-mediated gene transcription. The chain is Serine/threonine-protein kinase 40 (stk40) from Xenopus tropicalis (Western clawed frog).